We begin with the raw amino-acid sequence, 397 residues long: Sulfate adenylyltransferase (397 aa).

The protein belongs to the sulfate adenylyltransferase family.

It catalyses the reaction sulfate + ATP + H(+) = adenosine 5'-phosphosulfate + diphosphate. Its pathway is sulfur metabolism; hydrogen sulfide biosynthesis; sulfite from sulfate: step 1/3. The sequence is that of Sulfate adenylyltransferase (sat) from Allochromatium vinosum (strain ATCC 17899 / DSM 180 / NBRC 103801 / NCIMB 10441 / D) (Chromatium vinosum).